We begin with the raw amino-acid sequence, 332 residues long: DNA-directed RNA polymerase subunit alpha (332 aa).

Residues 1 to 226 (MLIAQRPTLT…ELFGLARELN (226 aa)) form an alpha N-terminal domain (alpha-NTD) region. Positions 243–332 (LSSELSMPIE…GYDEDESTTI (90 aa)) are alpha C-terminal domain (alpha-CTD).

Belongs to the RNA polymerase alpha chain family. In terms of assembly, homodimer. The RNAP catalytic core consists of 2 alpha, 1 beta, 1 beta' and 1 omega subunit. When a sigma factor is associated with the core the holoenzyme is formed, which can initiate transcription.

The enzyme catalyses RNA(n) + a ribonucleoside 5'-triphosphate = RNA(n+1) + diphosphate. Functionally, DNA-dependent RNA polymerase catalyzes the transcription of DNA into RNA using the four ribonucleoside triphosphates as substrates. This chain is DNA-directed RNA polymerase subunit alpha, found in Leifsonia xyli subsp. xyli (strain CTCB07).